We begin with the raw amino-acid sequence, 77 residues long: Acyl carrier protein (77 aa).

The region spanning 1-76 (MSLEDDVKSI…DVITYIKTRQ (76 aa)) is the Carrier domain. Ser-36 bears the O-(pantetheine 4'-phosphoryl)serine mark.

This sequence belongs to the acyl carrier protein (ACP) family. 4'-phosphopantetheine is transferred from CoA to a specific serine of apo-ACP by AcpS. This modification is essential for activity because fatty acids are bound in thioester linkage to the sulfhydryl of the prosthetic group.

The protein localises to the cytoplasm. It functions in the pathway lipid metabolism; fatty acid biosynthesis. Functionally, carrier of the growing fatty acid chain in fatty acid biosynthesis. This is Acyl carrier protein from Chlamydia caviae (strain ATCC VR-813 / DSM 19441 / 03DC25 / GPIC) (Chlamydophila caviae).